Here is a 154-residue protein sequence, read N- to C-terminus: Transcriptional repressor NrdR (154 aa).

A zinc finger lies at 3 to 34; sequence CPFCRHPDSRVIDSRETDEGQAIRRRRSCPEC. In terms of domain architecture, ATP-cone spans 46–136; sequence LAVVKRSGVT…VYRSFSSADD (91 aa).

This sequence belongs to the NrdR family. Requires Zn(2+) as cofactor.

Negatively regulates transcription of bacterial ribonucleotide reductase nrd genes and operons by binding to NrdR-boxes. The polypeptide is Transcriptional repressor NrdR (Mycobacterium bovis (strain ATCC BAA-935 / AF2122/97)).